The primary structure comprises 240 residues: Caffeoyl-CoA O-methyltransferase 5 (240 aa).

Residue Lys-14 coordinates substrate. S-adenosyl-L-methionine-binding positions include Thr-56, Glu-78, 80 to 81, Ser-86, Asp-104, and Ala-133; that span reads GV. Position 156 (Asp-156) interacts with substrate. A divalent metal cation is bound at residue Asp-156. Asp-158 serves as a coordination point for S-adenosyl-L-methionine. The a divalent metal cation site is built by Asp-182 and Asn-183. Asn-187 lines the substrate pocket.

Belongs to the class I-like SAM-binding methyltransferase superfamily. Cation-dependent O-methyltransferase family. CCoAMT subfamily. It depends on Mg(2+) as a cofactor. Expression steadily increases from the bottom to the top of the plant.

The catalysed reaction is (E)-caffeoyl-CoA + S-adenosyl-L-methionine = (E)-feruloyl-CoA + S-adenosyl-L-homocysteine + H(+). It functions in the pathway aromatic compound metabolism; phenylpropanoid biosynthesis. Methylates caffeoyl-CoA to feruloyl-CoA and 5-hydroxyferuloyl-CoA to sinapoyl-CoA. Plays a role in the synthesis of feruloylated polysaccharides. Involved in the reinforcement of the plant cell wall. Also involved in the responding to wounding or pathogen challenge by the increased formation of cell wall-bound ferulic acid polymers. Methylates 5-hydroxyferulolyl-CoA more efficiently than caffeoyl-CoA. The sequence is that of Caffeoyl-CoA O-methyltransferase 5 (CCOAOMT5) from Nicotiana tabacum (Common tobacco).